A 477-amino-acid chain; its full sequence is Ribosomal RNA small subunit methyltransferase F (477 aa).

S-adenosyl-L-methionine-binding positions include 125–131, E149, D176, and D194; that span reads AAAPGSK. The active-site Nucleophile is the C247.

The protein belongs to the class I-like SAM-binding methyltransferase superfamily. RsmB/NOP family.

The protein resides in the cytoplasm. The catalysed reaction is cytidine(1407) in 16S rRNA + S-adenosyl-L-methionine = 5-methylcytidine(1407) in 16S rRNA + S-adenosyl-L-homocysteine + H(+). Specifically methylates the cytosine at position 1407 (m5C1407) of 16S rRNA. This Klebsiella pneumoniae (strain 342) protein is Ribosomal RNA small subunit methyltransferase F.